Here is a 790-residue protein sequence, read N- to C-terminus: Pentatricopeptide repeat-containing protein OTP51, chloroplastic (790 aa).

The transit peptide at 1–56 (MATTSPCAAPSPSLRCPLALSHPFASPPPPPALRLAGPKLLPGRLAVSPPPGIPAV) directs the protein to the chloroplast. PPR repeat units follow at residues 182-216 (NFAL…GRVP), 217-254 (AEST…GGYK), 256-296 (RLSL…NLDV), 299-333 (DVYA…GFDE), 334-368 (GIDV…GSDL), 369-403 (PVQA…NIPP), 404-438 (NVAS…DMKH), 439-469 (LMPA…CIAR), 473-507 (NRIL…GMIG), and 509-543 (NTKS…KYDV). A disordered region spans residues 762–790 (GSSIGSDGTQDTDTDSDDDMQMSDTERDE). The segment covering 771–790 (QDTDTDSDDDMQMSDTERDE) has biased composition (acidic residues).

Belongs to the PPR family. P subfamily.

The protein resides in the plastid. It localises to the chloroplast. Its function is as follows. Promotes the splicing of group II introns in chloroplasts. Required for the splicing of intron 2 of plastid ycf3 transcripts, a factor required for the assembly of photosystem I (PSI). Involved in the splicing of atpF, ndhA, petB and rps16 chloroplastic transcripts. Required for the assembly of PSI. This chain is Pentatricopeptide repeat-containing protein OTP51, chloroplastic, found in Oryza sativa subsp. japonica (Rice).